The primary structure comprises 183 residues: Protein CT_584 (183 aa).

This sequence belongs to the chlamydial CPn_0803/CT_584/TC_0873 family.

This Chlamydia trachomatis serovar D (strain ATCC VR-885 / DSM 19411 / UW-3/Cx) protein is Protein CT_584.